A 70-amino-acid chain; its full sequence is Beta-defensin 131B (70 aa).

Positions 1-22 are cleaved as a signal peptide; that stretch reads MRVLFFVFGVLSLMSTVPPTRS. 3 disulfides stabilise this stretch: Cys-29–Cys-56, Cys-36–Cys-50, and Cys-40–Cys-57.

It belongs to the beta-defensin family.

Its subcellular location is the secreted. Has antibacterial activity. In Homo sapiens (Human), this protein is Beta-defensin 131B.